Here is a 306-residue protein sequence, read N- to C-terminus: D-alanine--D-alanine ligase (306 aa).

The 199-residue stretch at 102 to 300 folds into the ATP-grasp domain; that stretch reads KIVVASVGVS…YGDIVQWMVE (199 aa). Residue 128–183 participates in ATP binding; it reads PMEPPYVIKPVCEGSSLGVIIVKENESVPSLNVVGSEWVYADTVIVEKYIPGRELT. Residues Asp253, Glu267, and Asn269 each coordinate Mg(2+).

The protein belongs to the D-alanine--D-alanine ligase family. Requires Mg(2+) as cofactor. Mn(2+) is required as a cofactor.

The protein resides in the cytoplasm. It carries out the reaction 2 D-alanine + ATP = D-alanyl-D-alanine + ADP + phosphate + H(+). It participates in cell wall biogenesis; peptidoglycan biosynthesis. In terms of biological role, cell wall formation. The chain is D-alanine--D-alanine ligase from Bartonella henselae (strain ATCC 49882 / DSM 28221 / CCUG 30454 / Houston 1) (Rochalimaea henselae).